An 803-amino-acid polypeptide reads, in one-letter code: Volume-regulated anion channel subunit LRRC8C (803 aa).

The Cytoplasmic segment spans residues 1 to 22; sequence MIPVTEFRQFSEQQPAFRVLKP. Residues 23 to 47 form a helical membrane-spanning segment; it reads WWDVFTDYLSVAMLMIGVFGCTLQV. Residues 48-124 lie on the Extracellular side of the membrane; the sequence is MQDKIICLPK…CYERALHWYA (77 aa). Cystine bridges form between C54/C308 and C115/C293. N-linked (GlcNAc...) asparagine glycosylation is found at N64 and N70. The helical transmembrane segment at 125–144 threads the bilayer; it reads KYFPYLVLIHTLVFMLCSNF. Topologically, residues 145 to 262 are cytoplasmic; the sequence is WFKFPGSSSK…EEGDILYAMY (118 aa). Residues 177–209 are disordered; sequence EVSGEDSEEKDNRKNNMNRSNTIQSGPEDSLVN. Positions 191-209 are enriched in polar residues; that stretch reads NNMNRSNTIQSGPEDSLVN. 2 positions are modified to phosphoserine: S212 and S215. A helical transmembrane segment spans residues 263–284; the sequence is VRQTVLKVIKFLIIIAYNSALV. Residues 285–314 lie on the Extracellular side of the membrane; sequence SKVQFTVDCNVDIQDMTGYKNFSCNHTMAH. A helical transmembrane segment spans residues 315-339; the sequence is LFSKLSFCYLCFVSIYGLTCLYTLY. Topologically, residues 340–803 are cytoplasmic; the sequence is WLFYRSLREY…SDVREQMKTE (464 aa). 17 LRR repeats span residues 397-420, 421-443, 446-466, 467-488, 490-513, 515-537, 541-563, 565-587, 588-611, 613-635, 636-659, 660-682, 684-705, 706-728, 730-751, 753-774, and 776-799; these read ENKL…KLQT, NAHN…VFEI, LQSL…IAQL, DNLQ…ALSF, KENL…MYGL, NLEE…TLES, LKSL…VVDV, SHLQ…NLKK, MTNL…VFSL, SLQE…SFQH, LRKL…IKKL, TSLE…LFLC, KIRY…IGVL, QSLQ…LYFC, KLKT…IGNL, FLSY…LGDC, and ALKR…VREQ.

It belongs to the LRRC8 family. Heterohexamer; oligomerizes with other LRRC8 proteins (LRRC8A, LRRC8B, LRRC8D and/or LRRC8E) to form a heterohexamer. Homoheptamer; inactive, likely because it is not targeted to the plasma membrane in the absence of LRRC8A. In vivo, the subunit composition may depend primarily on expression levels, and heterooligomeric channels containing various proportions of the different LRRC8 proteins may coexist. Expressed at highest levels in skeletal muscle, and at moderate levels in heart, lung and peripheral blood leukocytes.

It localises to the cell membrane. The protein localises to the endoplasmic reticulum membrane. It carries out the reaction chloride(in) = chloride(out). The enzyme catalyses iodide(out) = iodide(in). The catalysed reaction is taurine(out) = taurine(in). It catalyses the reaction 2',3'-cGAMP(out) = 2',3'-cGAMP(in). Non-essential component of the volume-regulated anion channel (VRAC, also named VSOAC channel), an anion channel required to maintain a constant cell volume in response to extracellular or intracellular osmotic changes. The VRAC channel conducts iodide better than chloride and can also conduct organic osmolytes like taurine. Plays a redundant role in the efflux of amino acids, such as aspartate and glutamate, in response to osmotic stress. The VRAC channel also mediates transport of immunoreactive cyclic dinucleotide GMP-AMP (2'-3'-cGAMP), an immune messenger produced in response to DNA virus in the cytosol. Channel activity requires LRRC8A plus at least one other family member (LRRC8B, LRRC8C, LRRC8D or LRRC8E); channel characteristics depend on the precise subunit composition. In Homo sapiens (Human), this protein is Volume-regulated anion channel subunit LRRC8C.